The primary structure comprises 430 residues: Adenylosuccinate synthetase (430 aa).

Residues 13 to 19 and 41 to 43 each bind GTP; these read GDEGKGK and GHT. Catalysis depends on Asp14, which acts as the Proton acceptor. 2 residues coordinate Mg(2+): Asp14 and Gly41. IMP contacts are provided by residues 14–17, 39–42, Thr130, Arg144, Gln225, Thr240, and Arg304; these read DEGK and NAGH. The Proton donor role is filled by His42. 300–306 contacts substrate; sequence ASTGRPR. GTP is bound by residues Arg306, 332-334, and 414-416; these read KLD and STG.

The protein belongs to the adenylosuccinate synthetase family. Homodimer. The cofactor is Mg(2+).

The protein localises to the cytoplasm. The catalysed reaction is IMP + L-aspartate + GTP = N(6)-(1,2-dicarboxyethyl)-AMP + GDP + phosphate + 2 H(+). It participates in purine metabolism; AMP biosynthesis via de novo pathway; AMP from IMP: step 1/2. In terms of biological role, plays an important role in the de novo pathway of purine nucleotide biosynthesis. Catalyzes the first committed step in the biosynthesis of AMP from IMP. This is Adenylosuccinate synthetase from Xylella fastidiosa (strain 9a5c).